Reading from the N-terminus, the 487-residue chain is WD-40 repeat-containing protein MSI5 (487 aa).

An N-acetylmethionine modification is found at M1. Over residues 1–12 (MESEAAATVQAT) the composition is skewed to low complexity. Residues 1–44 (MESEAAATVQATRPRRAPRTPVTAILTDKRRRKPKSNNESQLPF) form a disordered region. The short motif at 14 to 21 (PRRAPRTP) is the Nuclear localization signal element. WD repeat units follow at residues 142-182 (IHPG…DRYA), 197-237 (GHQD…TMAG), 270-310 (GHKD…SPAM), 315-355 (AHDA…SNGV), 364-404 (GHRA…KKSE), and 419-466 (GHRD…YRPE). The tract at residues 236-268 (AGSDSKSPGSSFKQTGEGSDKTGGPSVGPRGIY) is disordered. Polar residues predominate over residues 237–252 (GSDSKSPGSSFKQTGE). The DWD box signature appears at 288–303 (FCSVGDDSCLMLWDAR).

Belongs to the WD repeat RBAP46/RBAP48/MSI1 family. In terms of assembly, interacts with AHL16. Interacts with LHP1, PDP2, PDP3 and PDP6. Component of the PRC2 (polycomb repressive complex 2) complex which regulates histone methylation on histone H3K27.

Its subcellular location is the nucleus. Its function is as follows. Core histone-binding subunit that may target chromatin assembly factors, chromatin remodeling factors and histone deacetylases to their histone substrates in a manner that is regulated by nucleosomal DNA. Acts together with PDP1 and MSI4/FVE to regulate the function of the PRC2 complex on FLC. The polypeptide is WD-40 repeat-containing protein MSI5 (Arabidopsis thaliana (Mouse-ear cress)).